The sequence spans 726 residues: Catalase-peroxidase (726 aa).

Residues 1–33 (MSTSDDIHNTTATGKCPFHQGGHDQSAGAGTTT) are disordered. Positions 105-226 (WHGAGTYRSI…LGATEMGLIY (122 aa)) form a cross-link, tryptophyl-tyrosyl-methioninium (Trp-Tyr) (with M-252). The Proton acceptor role is filled by histidine 106. The segment at residues 226–252 (YVNPEGPDHSGEPLSAAAAIRATFGNM) is a cross-link (tryptophyl-tyrosyl-methioninium (Tyr-Met) (with W-105)). Histidine 267 lines the heme b pocket.

The protein belongs to the peroxidase family. Peroxidase/catalase subfamily. As to quaternary structure, homodimer or homotetramer. Heme b is required as a cofactor. In terms of processing, formation of the three residue Trp-Tyr-Met cross-link is important for the catalase, but not the peroxidase activity of the enzyme.

The enzyme catalyses H2O2 + AH2 = A + 2 H2O. The catalysed reaction is 2 H2O2 = O2 + 2 H2O. In terms of biological role, bifunctional enzyme with both catalase and broad-spectrum peroxidase activity. This Shigella flexneri protein is Catalase-peroxidase.